We begin with the raw amino-acid sequence, 453 residues long: Putative dipeptidase UREG_03382 (453 aa).

The tract at residues 1–33 (MSTRDHVKQSPMPVQEGYPRSSKEFSPPSSRSR) is disordered. The chain crosses the membrane as a helical span at residues 41–63 (LTMSLLIAAGAATFSKYIFPLGS). H95, D97, and E208 together coordinate Zn(2+). C147 and C223 form a disulfide bridge. Residue H221 participates in substrate binding. Zn(2+) is bound by residues H265 and H286. 2 residues coordinate substrate: R297 and D357. Residues N370 and N443 are each glycosylated (N-linked (GlcNAc...) asparagine).

The protein belongs to the metallo-dependent hydrolases superfamily. Peptidase M19 family. Zn(2+) is required as a cofactor.

The protein localises to the membrane. It catalyses the reaction an L-aminoacyl-L-amino acid + H2O = 2 an L-alpha-amino acid. Hydrolyzes a wide range of dipeptides. The sequence is that of Putative dipeptidase UREG_03382 from Uncinocarpus reesii (strain UAMH 1704).